The chain runs to 257 residues: Ribosomal RNA small subunit methyltransferase A (257 aa).

Residues N12, L14, G39, E60, D85, and N105 each coordinate S-adenosyl-L-methionine.

The protein belongs to the class I-like SAM-binding methyltransferase superfamily. rRNA adenine N(6)-methyltransferase family. RsmA subfamily.

It localises to the cytoplasm. It catalyses the reaction adenosine(1518)/adenosine(1519) in 16S rRNA + 4 S-adenosyl-L-methionine = N(6)-dimethyladenosine(1518)/N(6)-dimethyladenosine(1519) in 16S rRNA + 4 S-adenosyl-L-homocysteine + 4 H(+). In terms of biological role, specifically dimethylates two adjacent adenosines (A1518 and A1519) in the loop of a conserved hairpin near the 3'-end of 16S rRNA in the 30S particle. May play a critical role in biogenesis of 30S subunits. This chain is Ribosomal RNA small subunit methyltransferase A, found in Methylococcus capsulatus (strain ATCC 33009 / NCIMB 11132 / Bath).